The following is a 163-amino-acid chain: Phosphopantetheine adenylyltransferase (163 aa).

S11 serves as a coordination point for substrate. ATP is bound by residues 11–12 and H19; that span reads SF. Substrate is bound by residues K43, L75, and R89. ATP contacts are provided by residues 90-92, E100, and 125-131; these read GLR and FGYLSSS.

It belongs to the bacterial CoaD family. In terms of assembly, homohexamer. It depends on Mg(2+) as a cofactor.

It is found in the cytoplasm. It carries out the reaction (R)-4'-phosphopantetheine + ATP + H(+) = 3'-dephospho-CoA + diphosphate. It participates in cofactor biosynthesis; coenzyme A biosynthesis; CoA from (R)-pantothenate: step 4/5. In terms of biological role, reversibly transfers an adenylyl group from ATP to 4'-phosphopantetheine, yielding dephospho-CoA (dPCoA) and pyrophosphate. This Geobacter metallireducens (strain ATCC 53774 / DSM 7210 / GS-15) protein is Phosphopantetheine adenylyltransferase.